Here is a 482-residue protein sequence, read N- to C-terminus: tRNA sulfurtransferase (482 aa).

In terms of domain architecture, THUMP spans 61 to 165 (LVIRDALTRI…DDRLLLIKGR (105 aa)). ATP is bound by residues 183–184 (LI), lysine 265, glycine 287, and glutamine 296. Cysteines 344 and 456 form a disulfide. Residues 404–482 (FGPNDVILDI…GFANVKVYRP (79 aa)) enclose the Rhodanese domain. The active-site Cysteine persulfide intermediate is cysteine 456.

Belongs to the ThiI family.

It localises to the cytoplasm. The catalysed reaction is [ThiI sulfur-carrier protein]-S-sulfanyl-L-cysteine + a uridine in tRNA + 2 reduced [2Fe-2S]-[ferredoxin] + ATP + H(+) = [ThiI sulfur-carrier protein]-L-cysteine + a 4-thiouridine in tRNA + 2 oxidized [2Fe-2S]-[ferredoxin] + AMP + diphosphate. The enzyme catalyses [ThiS sulfur-carrier protein]-C-terminal Gly-Gly-AMP + S-sulfanyl-L-cysteinyl-[cysteine desulfurase] + AH2 = [ThiS sulfur-carrier protein]-C-terminal-Gly-aminoethanethioate + L-cysteinyl-[cysteine desulfurase] + A + AMP + 2 H(+). It functions in the pathway cofactor biosynthesis; thiamine diphosphate biosynthesis. Catalyzes the ATP-dependent transfer of a sulfur to tRNA to produce 4-thiouridine in position 8 of tRNAs, which functions as a near-UV photosensor. Also catalyzes the transfer of sulfur to the sulfur carrier protein ThiS, forming ThiS-thiocarboxylate. This is a step in the synthesis of thiazole, in the thiamine biosynthesis pathway. The sulfur is donated as persulfide by IscS. This Salmonella typhimurium (strain LT2 / SGSC1412 / ATCC 700720) protein is tRNA sulfurtransferase.